The sequence spans 317 residues: UV DNA damage endonuclease (317 aa).

Belongs to the uve1/UvsE family.

Functionally, component in a DNA repair pathway. Removal of UV LIGHT damaged nucleotides. Recognizes pyrimidine dimers and cleave a phosphodiester bond immediately 5' to the lesion. This is UV DNA damage endonuclease from Bacillus cereus (strain ATCC 10987 / NRS 248).